A 406-amino-acid chain; its full sequence is LIM/homeobox protein Lhx1 (406 aa).

2 LIM zinc-binding domains span residues 4 to 54 and 63 to 117; these read CAGC…CKND and CAGC…CKED. 2 disordered regions span residues 128–187 and 293–374; these read NSLH…RTTI and YDFF…EVFG. Residues 137–148 are compositionally biased toward low complexity; that stretch reads SDPSLSPDSQDP. The segment covering 151–167 has biased composition (basic and acidic residues); the sequence is DDAKDSESANVSDKEAG. At serine 162 the chain carries Phosphoserine. Residues 180–239 constitute a DNA-binding region (homeobox); the sequence is RRGPRTTIKAKQLETLKAAFAATPKPTRHIREQLAQETGLNMRVIQVWFQNRRSKERRMK. A compositionally biased stretch (low complexity) spans 315 to 327; it reads PSSGPSGTPLGGL. The span at 352 to 362 shows a compositional bias: pro residues; it reads GDSPSPEPSLP.

In terms of assembly, interacts with LDB1 via the tandem LIM domains. As to expression, expressed in the brain, thymus, and tonsils. Expressed in samples from patients with chronic myeloid leukemia (CML) and in 58% of acute myeloid leukemia (AML) cell lines.

It is found in the nucleus. Potential transcription factor. May play a role in early mesoderm formation and later in lateral mesoderm differentiation and neurogenesis. This is LIM/homeobox protein Lhx1 (LHX1) from Homo sapiens (Human).